Here is an 805-residue protein sequence, read N- to C-terminus: Chloride channel protein (805 aa).

At 1 to 48 (MSHEKNEASGYPEAQSWKSQEAMLGARTEVSRWRAVKNCLYRHLVKVL) the chain is on the cytoplasmic side. The next 2 helical transmembrane spans lie at 49-86 (GEDW…LFAL) and 93-116 (LQYL…CQIV). Positions 122–126 (GSGIP) match the Selectivity filter part_1 motif. Serine 123 lines the chloride pocket. Residues 125–132 (IPELKTII) constitute an intramembrane region (helical). 2 consecutive transmembrane segments (helical) span residues 141-159 (LTLR…ALSA) and 166-184 (EGPF…NQLL). A Selectivity filter part_2 motif is present at residues 164–168 (GKEGP). 2 intramembrane regions (helical) span residues 201–213 (ILTV…ISCC) and 217–225 (PLAGVLFSI). The next 3 membrane-spanning stretches (helical) occupy residues 237 to 256 (YWRG…VLSV), 283 to 311 (MPAF…IVFM), and 320 to 339 (ILKK…LATL). Asparagine 365 carries N-linked (GlcNAc...) asparagine glycosylation. 2 helical membrane-spanning segments follow: residues 388–408 (LNIF…AALA) and 416–439 (GAFV…MALL). Residues 416–420 (GAFVP) carry the Selectivity filter part_3 motif. Position 418 (phenylalanine 418) interacts with chloride. The helical intramembrane region spans 456–470 (GEYAVIGAAAMTGAV). The note=Loop between two helices intramembrane region spans 471–472 (TH). Residues 473 to 484 (AVSTAVICFELT) constitute an intramembrane region (helical). The note=Loop between two helices intramembrane region spans 485-489 (GQISH). A helical membrane pass occupies residues 490–507 (VLPMMVAVILANMVAQGL). Topologically, residues 508–805 (QPSLYDSIIQ…RTATSNSSGK (298 aa)) are cytoplasmic. Residue tyrosine 512 coordinates chloride. One can recognise a CBS 1 domain in the interval 543–601 (MVRDVTSIASTSTYGDLLHVLRQTKLKFFPFVDTPDTNTLLGSIDRTEVEGLLQRRISA). 2 disordered regions span residues 606–625 (PAAA…GASF) and 653–684 (KVQT…QKGT). The region spanning 719–776 (IDQSPFQLVEGTSLQKTHTLFSLLGLDRAYVTSMGKLVGVVALAEIQAAIEGSYQKGF) is the CBS 2 domain.

The protein belongs to the chloride channel (TC 2.A.49) family. ClC-0 subfamily. Homodimer. Each subunit contains a channel ('Double barreled channel').

Its subcellular location is the membrane. Its function is as follows. Voltage-gated chloride channel. This channel is thought to ensure the high conductance of the non-innervated membrane of the electrocyte necessary for efficient current generation caused by sodium influx through the acetylcholine receptor at the innervated membrane. The polypeptide is Chloride channel protein (Torpedo marmorata (Marbled electric ray)).